A 504-amino-acid chain; its full sequence is Biotinidase (504 aa).

Residues 1–20 form the signal peptide; that stretch reads MFSFGTVFTFALLLIPLTEA. Residues 30–309 enclose the CN hydrolase domain; it reads YEHNLILNPD…GRLLVARVPV (280 aa). E79 functions as the Proton acceptor in the catalytic mechanism. N-linked (GlcNAc...) asparagine glycosylation is found at N86 and N117. The active-site Proton donor is the K181. C214 acts as the Nucleophile in catalysis. N261, N365, and N375 each carry an N-linked (GlcNAc...) asparagine glycan.

It belongs to the carbon-nitrogen hydrolase superfamily. BTD/VNN family.

It localises to the secreted. The protein resides in the extracellular space. The catalysed reaction is biocytin + H2O = biotin + L-lysine. The enzyme catalyses biotin amide + H2O = biotin + NH4(+). Catalytic release of biotin from biocytin, the product of biotin-dependent carboxylases degradation. The chain is Biotinidase (btd) from Takifugu rubripes (Japanese pufferfish).